A 1755-amino-acid polypeptide reads, in one-letter code: Transposon Ty1-ER1 Gag-Pol polyprotein (1755 aa).

Polar residues-rich tracts occupy residues 1–23 (MESQ…SVTS), 48–60 (TKAN…TPAS), and 127–152 (QSQF…GNTF). 3 disordered regions span residues 1–93 (MESQ…MMTQ), 126–174 (PQSQ…PPPM), and 352–421 (GSRN…SKST). Positions 153–165 (TDSSSADSDMTST) are enriched in low complexity. An RNA-binding region spans residues 299 to 401 (NNGIHINNKV…NSKSKTARAH (103 aa)). Residues 402–418 (NVSTSNNSPSTDNDSIS) show a composition bias toward low complexity. S416 bears the Phosphoserine mark. The For protease activity; shared with dimeric partner role is filled by D461. An integrase-type zinc finger-like region spans residues 583–640 (NVHTSESTRKYPYPFIHRMLAHANAQTIRYSLKNNTITYFNESDVDWSSAIDYQCPDC). The Integrase catalytic domain occupies 660–835 (NSYEPFQYLH…AGLDISTLLP (176 aa)). The Mg(2+) site is built by D671 and D736. Disordered regions lie at residues 956 to 1087 (SKAV…ETEK), 1092 to 1111 (RSPS…NIVP), and 1130 to 1171 (DLPL…DSNA). Over residues 960–969 (SPTDSTPPST) the composition is skewed to low complexity. Positions 1005 to 1015 (STPQISNIEST) are enriched in polar residues. Residues 1038-1053 (ESSHASKSKDFRHSDS) show a composition bias toward basic and acidic residues. 2 stretches are compositionally biased toward polar residues: residues 1054-1082 (YSEN…QISD) and 1101-1111 (PENNSSHNIVP). The Bipartite nuclear localization signal motif lies at 1178 to 1212 (KKRSLEDNETEIKVSRDTWNTKNMRSLEPPRSKKR). Positions 1338–1476 (NNYYITQLDI…DILGLEIKYQ (139 aa)) constitute a Reverse transcriptase Ty1/copia-type domain. The Mg(2+) site is built by D1346, D1427, D1428, D1610, E1652, and D1685. One can recognise an RNase H Ty1/copia-type domain in the interval 1610–1752 (DASYGNQPYY…IKTFKLLTNK (143 aa)).

In terms of assembly, the capsid protein forms a homotrimer, from which the VLPs are assembled. The protease is a homodimer, whose active site consists of two apposed aspartic acid residues. In terms of processing, initially, virus-like particles (VLPs) are composed of the structural unprocessed proteins Gag and Gag-Pol, and also contain the host initiator methionine tRNA (tRNA(i)-Met) which serves as a primer for minus-strand DNA synthesis, and a dimer of genomic Ty RNA. Processing of the polyproteins occurs within the particle and proceeds by an ordered pathway, called maturation. First, the protease (PR) is released by autocatalytic cleavage of the Gag-Pol polyprotein yielding capsid protein p45 and a Pol-p154 precursor protein. This cleavage is a prerequisite for subsequent processing of Pol-p154 at the remaining sites to release the mature structural and catalytic proteins. Maturation takes place prior to the RT reaction and is required to produce transposition-competent VLPs.

It localises to the cytoplasm. The protein localises to the nucleus. The catalysed reaction is DNA(n) + a 2'-deoxyribonucleoside 5'-triphosphate = DNA(n+1) + diphosphate. It catalyses the reaction Endonucleolytic cleavage to 5'-phosphomonoester.. Its function is as follows. Capsid protein (CA) is the structural component of the virus-like particle (VLP), forming the shell that encapsulates the retrotransposons dimeric RNA genome. The particles are assembled from trimer-clustered units and there are holes in the capsid shells that allow for the diffusion of macromolecules. CA also has nucleocapsid-like chaperone activity, promoting primer tRNA(i)-Met annealing to the multipartite primer-binding site (PBS), dimerization of Ty1 RNA and initiation of reverse transcription. The aspartyl protease (PR) mediates the proteolytic cleavages of the Gag and Gag-Pol polyproteins after assembly of the VLP. In terms of biological role, reverse transcriptase/ribonuclease H (RT) is a multifunctional enzyme that catalyzes the conversion of the retro-elements RNA genome into dsDNA within the VLP. The enzyme displays a DNA polymerase activity that can copy either DNA or RNA templates, and a ribonuclease H (RNase H) activity that cleaves the RNA strand of RNA-DNA heteroduplexes during plus-strand synthesis and hydrolyzes RNA primers. The conversion leads to a linear dsDNA copy of the retrotransposon that includes long terminal repeats (LTRs) at both ends. Functionally, integrase (IN) targets the VLP to the nucleus, where a subparticle preintegration complex (PIC) containing at least integrase and the newly synthesized dsDNA copy of the retrotransposon must transit the nuclear membrane. Once in the nucleus, integrase performs the integration of the dsDNA into the host genome. This is Transposon Ty1-ER1 Gag-Pol polyprotein (TY1B-ER1) from Saccharomyces cerevisiae (strain ATCC 204508 / S288c) (Baker's yeast).